We begin with the raw amino-acid sequence, 199 residues long: MNSPLVVGFLACFTLIAAIGAQNAFVLRQGIQREHVLPVVALCTVSDIVLIAAGIAGFGALIGAHPRALNVVKFGGAAFLIGYGLLAARRAWRPVALIPSGATPVRLAEVLVTCAAFTFLNPHVYLDTVVLLGALANEHSDQRWLFGLGAVTASAVWFATLGFGAGRLRGLFTNPGSWRILDGLIAVMMVALGISLTVT.

Helical transmembrane passes span 6–26 (VVGF…NAFV), 42–62 (LCTV…GALI), 68–88 (ALNV…LLAA), 144–164 (WLFG…LGFG), and 178–198 (WRIL…SLTV).

This sequence belongs to the LysE/ArgO transporter (TC 2.A.75) family.

It is found in the cell inner membrane. Its function is as follows. Catalyzes the efflux of L-lysine. The chain is Lysine exporter LysE from Mycobacterium bovis (strain ATCC BAA-935 / AF2122/97).